We begin with the raw amino-acid sequence, 318 residues long: Taste receptor type 2 member 60 (318 aa).

Residues 1 to 7 (MNGDHMV) lie on the Extracellular side of the membrane. Residues 8–28 (LGSSMTDEKAIILVIILLLLC) form a helical membrane-spanning segment. The Cytoplasmic portion of the chain corresponds to 29 to 40 (LVAIAGNCFITA). The helical transmembrane segment at 41 to 61 (ALGMEWVLQRMLLPCDKLLVS) threads the bilayer. The Extracellular portion of the chain corresponds to 62–88 (LGASRFCPQWVVMGKTTYVFLYPTAFP). A helical membrane pass occupies residues 89 to 109 (YNPVLRFLAFQWDLLNAATLW). Residues 110-128 (FSTWLSVFYCVKIATFTHP) are Cytoplasmic-facing. A helical transmembrane segment spans residues 129-149 (VFLWLKHKLSEWVPWMLFSSV). The Extracellular portion of the chain corresponds to 150–183 (GLSSFTTILFFIGNHRVYQSYLRNHLQPWNVTGN). Asn-179 is a glycosylation site (N-linked (GlcNAc...) asparagine). A helical transmembrane segment spans residues 184–204 (SIWSYCEKFYLFPLKMITWTM). Residues 205–234 (PTAVFFICMILLITSLGRHMKKALLTNSGF) are Cytoplasmic-facing. Residues 235–255 (RDPSVQAHIKAMLALLSFAML) form a helical membrane-spanning segment. The Extracellular segment spans residues 256-264 (FISYFLSLV). A helical membrane pass occupies residues 265-285 (FSAAGIFPPLDFKFWVWESVI). Over 286–318 (YLCAAVHPIILLFSNRRLRAVLKRCRSSRCGTP) the chain is Cytoplasmic.

This sequence belongs to the G-protein coupled receptor T2R family.

The protein localises to the membrane. Receptor that may play a role in the perception of bitterness and is gustducin-linked. May play a role in sensing the chemical composition of the gastrointestinal content. The activity of this receptor may stimulate alpha gustducin, mediate PLC-beta-2 activation and lead to the gating of TRPM5. This is Taste receptor type 2 member 60 (TAS2R60) from Pongo pygmaeus (Bornean orangutan).